The sequence spans 144 residues: Virulence protein STM3117 (144 aa).

Residues 23-143 (RIDHLVLTVS…DGNLIEISQY (121 aa)) form the VOC domain.

Its function is as follows. Is critically involved in promoting the replication of S.typhimurium cells inside host macrophages, suggesting a role in the establishment of bacterial colonization within macrophages. May be involved in the biosynthesis and modification of the peptidoglycan layer of the cell wall. This chain is Virulence protein STM3117, found in Salmonella typhimurium (strain LT2 / SGSC1412 / ATCC 700720).